Consider the following 199-residue polypeptide: Recombination protein RecR (199 aa).

Residues cysteine 57 to cysteine 72 form a C4-type zinc finger. The 96-residue stretch at glycine 81 to proline 176 folds into the Toprim domain.

The protein belongs to the RecR family.

Its function is as follows. May play a role in DNA repair. It seems to be involved in an RecBC-independent recombinational process of DNA repair. It may act with RecF and RecO. This chain is Recombination protein RecR, found in Psychromonas ingrahamii (strain DSM 17664 / CCUG 51855 / 37).